A 572-amino-acid chain; its full sequence is Urease subunit alpha (572 aa).

The Urease domain occupies 134 to 572 (AGIDSHIHLI…ASMNQRYFFG (439 aa)). Ni(2+) is bound by residues histidine 139, histidine 141, and lysine 222. Lysine 222 carries the N6-carboxylysine modification. Histidine 224 is a substrate binding site. Ni(2+)-binding residues include histidine 251 and histidine 277. The Proton donor role is filled by histidine 325. Aspartate 365 contributes to the Ni(2+) binding site.

It belongs to the metallo-dependent hydrolases superfamily. Urease alpha subunit family. As to quaternary structure, heterotrimer of UreA (gamma), UreB (beta) and UreC (alpha) subunits. Three heterotrimers associate to form the active enzyme. Requires Ni cation as cofactor. Post-translationally, carboxylation allows a single lysine to coordinate two nickel ions.

It is found in the cytoplasm. It carries out the reaction urea + 2 H2O + H(+) = hydrogencarbonate + 2 NH4(+). It functions in the pathway nitrogen metabolism; urea degradation; CO(2) and NH(3) from urea (urease route): step 1/1. This chain is Urease subunit alpha, found in Yersinia pseudotuberculosis serotype O:1b (strain IP 31758).